The primary structure comprises 106 residues: UPF0145 protein Nmul_A0734 (106 aa).

Belongs to the UPF0145 family.

The sequence is that of UPF0145 protein Nmul_A0734 from Nitrosospira multiformis (strain ATCC 25196 / NCIMB 11849 / C 71).